Reading from the N-terminus, the 413-residue chain is Peptidase T (413 aa).

Residue H81 coordinates Zn(2+). D83 is a catalytic residue. D143 serves as a coordination point for Zn(2+). E178 functions as the Proton acceptor in the catalytic mechanism. 3 residues coordinate Zn(2+): E179, D201, and H383.

Belongs to the peptidase M20B family. Zn(2+) is required as a cofactor.

It is found in the cytoplasm. The catalysed reaction is Release of the N-terminal residue from a tripeptide.. Its function is as follows. Cleaves the N-terminal amino acid of tripeptides. In Lactococcus lactis subsp. cremoris (Streptococcus cremoris), this protein is Peptidase T.